A 582-amino-acid polypeptide reads, in one-letter code: Putative transcriptional regulator HVO_1357 (582 aa).

The region spanning Val-19–Leu-129 is the Response regulatory domain. Residue Asp-67 is modified to 4-aspartylphosphate. Residues Leu-165–Val-203 adopt a coiled-coil conformation. One can recognise an HTH bat-type domain in the interval Leu-517–Glu-569.

May be part of a signal-dependent gene regulation cascade that is relevant to swimming motility. May be involved in the transcription regulation of target genes. The protein is Putative transcriptional regulator HVO_1357 of Haloferax volcanii (strain ATCC 29605 / DSM 3757 / JCM 8879 / NBRC 14742 / NCIMB 2012 / VKM B-1768 / DS2) (Halobacterium volcanii).